The sequence spans 871 residues: Envelope glycoprotein gp160 (871 aa).

A signal peptide spans 1 to 21 (MKNLIGITLILIITILGIGFS). The Extracellular segment spans residues 22–684 (TYYTTVFYGV…DITQWLWYIK (663 aa)). Cysteine 43 and cysteine 63 are joined by a disulfide. Asparagine 77, asparagine 124, asparagine 127, asparagine 142, asparagine 153, asparagine 157, asparagine 185, asparagine 194, asparagine 229, asparagine 238, asparagine 259, asparagine 273, asparagine 285, asparagine 289, asparagine 297, asparagine 329, asparagine 345, asparagine 352, asparagine 384, asparagine 387, asparagine 395, asparagine 398, asparagine 438, asparagine 451, and asparagine 496 each carry an N-linked (GlcNAc...) asparagine; by host glycan. 5 disulfides stabilise this stretch: cysteine 108–cysteine 202, cysteine 115–cysteine 193, cysteine 120–cysteine 154, cysteine 215–cysteine 244, and cysteine 225–cysteine 236. Residues 120-153 (CTMTNTTNKTLNSATTTLTPTVNLSSIPNYEVYN) form a V1 region. The V2 stretch occupies residues 154–193 (CSFNQTTEFRDKKKQIYSLFYREDIVKEDGNNNSYYLHNC). Residues 292–325 (CERTGNNTRGQVQIGPGMTFYNIENVVGDTRKAY) form a V3 region. Residues cysteine 292 and cysteine 326 are joined by a disulfide bond. Cystine bridges form between cysteine 376-cysteine 435 and cysteine 383-cysteine 408. A V4 region spans residues 383-408 (CNLTNWTNTWTANRTNNTHGTLVAPC). The segment at 451 to 458 (NNSYTPQF) is V5. Residues 502 to 522 (RDVGIGLLFLGFLSAAGSTMG) are fusion peptide. The immunosuppression stretch occupies residues 567 to 583 (LQARMLAVEKYIRDQQL). N-linked (GlcNAc...) asparagine; by host glycosylation is found at asparagine 602, asparagine 613, asparagine 626, and asparagine 638. Positions 645 to 668 (SLLEKAQTQQEKNKQELLELDKWS) form a coiled coil. The interval 663 to 684 (ELDKWSSLWDWFDITQWLWYIK) is MPER; binding to GalCer. A helical transmembrane segment spans residues 685 to 705 (IAIIIVAGLVGLRILMFIVNV). Residues 706–871 (VKQVRQGYTP…IRQGLELALN (166 aa)) lie on the Cytoplasmic side of the membrane. Residues 713-716 (YTPL) carry the YXXL motif; contains endocytosis signal motif.

In terms of assembly, the mature envelope protein (Env) consists of a homotrimer of non-covalently associated gp120-gp41 heterodimers. The resulting complex protrudes from the virus surface as a spike. Interacts with host CD4 and CCR5. Gp120 also interacts with the C-type lectins CD209/DC-SIGN and CLEC4M/DC-SIGNR (collectively referred to as DC-SIGN(R)). As to quaternary structure, the mature envelope protein (Env) consists of a homotrimer of non-covalently associated gp120-gp41 heterodimers. The resulting complex protrudes from the virus surface as a spike. In terms of processing, specific enzymatic cleavages in vivo yield mature proteins. Envelope glycoproteins are synthesized as an inactive precursor that is heavily N-glycosylated and processed likely by host cell furin in the Golgi to yield the mature SU and TM proteins. The cleavage site between SU and TM requires the minimal sequence [KR]-X-[KR]-R.

It localises to the virion membrane. The protein resides in the host cell membrane. Its subcellular location is the host endosome membrane. The surface protein gp120 (SU) attaches the virus to the host lymphoid cell by binding to the primary receptor CD4. This interaction induces a structural rearrangement creating a high affinity binding site for a chemokine coreceptor like CCR5. This peculiar 2 stage receptor-interaction strategy allows gp120 to maintain the highly conserved coreceptor-binding site in a cryptic conformation, protected from neutralizing antibodies. These changes are transmitted to the transmembrane protein gp41 and are thought to activate its fusogenic potential by unmasking its fusion peptide. Its function is as follows. Surface protein gp120 (SU) may target the virus to gut-associated lymphoid tissue (GALT) by binding host ITGA4/ITGB7 (alpha-4/beta-7 integrins), a complex that mediates T-cell migration to the GALT. Interaction between gp120 and ITGA4/ITGB7 would allow the virus to enter GALT early in the infection, infecting and killing most of GALT's resting CD4+ T-cells. This T-cell depletion is believed to be the major insult to the host immune system leading to AIDS. Functionally, the surface protein gp120 is a ligand for CD209/DC-SIGN and CLEC4M/DC-SIGNR, which are respectively found on dendritic cells (DCs), and on endothelial cells of liver sinusoids and lymph node sinuses. These interactions allow capture of viral particles at mucosal surfaces by these cells and subsequent transmission to permissive cells. DCs are professional antigen presenting cells, critical for host immunity by inducing specific immune responses against a broad variety of pathogens. They act as sentinels in various tissues where they take up antigen, process it, and present it to T-cells following migration to lymphoid organs. SIV subverts the migration properties of dendritic cells to gain access to CD4+ T-cells in lymph nodes. Virus transmission to permissive T-cells occurs either in trans (without DCs infection, through viral capture and transmission), or in cis (following DCs productive infection, through the usual CD4-gp120 interaction), thereby inducing a robust infection. In trans infection, bound virions remain infectious over days and it is proposed that they are not degraded, but protected in non-lysosomal acidic organelles within the DCs close to the cell membrane thus contributing to the viral infectious potential during DCs' migration from the periphery to the lymphoid tissues. On arrival at lymphoid tissues, intact virions recycle back to DCs' cell surface allowing virus transmission to CD4+ T-cells. Virion capture also seems to lead to MHC-II-restricted viral antigen presentation, and probably to the activation of SIV-specific CD4+ cells. In terms of biological role, the transmembrane protein gp41 (TM) acts as a class I viral fusion protein. Under the current model, the protein has at least 3 conformational states: pre-fusion native state, pre-hairpin intermediate state, and post-fusion hairpin state. During fusion of viral and target intracellular membranes, the coiled coil regions (heptad repeats) assume a trimer-of-hairpins structure, positioning the fusion peptide in close proximity to the C-terminal region of the ectodomain. The formation of this structure appears to drive apposition and subsequent fusion of viral and target cell membranes. Complete fusion occurs in host cell endosomes. The virus undergoes clathrin-dependent internalization long before endosomal fusion, thus minimizing the surface exposure of conserved viral epitopes during fusion and reducing the efficacy of inhibitors targeting these epitopes. Membranes fusion leads to delivery of the nucleocapsid into the cytoplasm. The envelope glycoprotein gp160 precursor down-modulates cell surface CD4 antigen by interacting with it in the endoplasmic reticulum and blocking its transport to the cell surface. Its function is as follows. The gp120-gp41 heterodimer allows rapid transcytosis of the virus through CD4 negative cells such as simple epithelial monolayers of the intestinal, rectal and endocervical epithelial barriers. Both gp120 and gp41 specifically recognize glycosphingolipids galactosyl-ceramide (GalCer) or 3' sulfo-galactosyl-ceramide (GalS) present in the lipid rafts structures of epithelial cells. Binding to these alternative receptors allows the rapid transcytosis of the virus through the epithelial cells. This transcytotic vesicle-mediated transport of virions from the apical side to the basolateral side of the epithelial cells does not involve infection of the cells themselves. The sequence is that of Envelope glycoprotein gp160 from Simian immunodeficiency virus (isolate TAN1) (SIV-cpz).